The sequence spans 252 residues: Small ribosomal subunit protein eS4 (252 aa).

Residues 43–105 (FPLLIIVRDI…TGETYRVIPV (63 aa)) form the S4 RNA-binding domain.

It belongs to the eukaryotic ribosomal protein eS4 family.

This chain is Small ribosomal subunit protein eS4, found in Staphylothermus marinus (strain ATCC 43588 / DSM 3639 / JCM 9404 / F1).